Here is a 404-residue protein sequence, read N- to C-terminus: Interferon-activable protein 205-A (404 aa).

The 88-residue stretch at 1 to 88 (MENEYKRLVL…AEILKKERSE (88 aa)) folds into the Pyrin domain. Residues 85-198 (ERSEVTEETS…KSQPQNQNIP (114 aa)) form a disordered region. 2 stretches are compositionally biased toward low complexity: residues 102–112 (ASPATPTSTTS) and 122–132 (TSTTQEETSTA). Residues 137 to 147 (GMSEEKTDVKK) are compositionally biased toward basic and acidic residues. Low complexity predominate over residues 168–185 (QSPISQVSSSASSNIPSA). The segment covering 186 to 197 (KNQKSQPQNQNI) has biased composition (polar residues). Residues 192–392 (PQNQNIPRGA…CGDHSFVKVT (201 aa)) form the HIN-200 domain.

The protein belongs to the HIN-200 family.

It localises to the nucleus. Its function is as follows. May act as a transcriptional regulator in the myeloid lineage. Inhibits cell growth via p53/TP53 and RB1-dependent and independent pathways. The polypeptide is Interferon-activable protein 205-A (Ifi205a) (Mus musculus (Mouse)).